A 384-amino-acid polypeptide reads, in one-letter code: Centrosomal protein of 44 kDa (384 aa).

Residues 11–188 (RKLEQRLRTL…TKCYSSALVE (178 aa)) form a binds with microtubules and centrioles region. A disordered region spans residues 191-222 (EEEEPTSDSEGGSHLEHEMESPFETAETTPNS). Over residues 201–210 (GGSHLEHEME) the composition is skewed to basic and acidic residues. 2 coiled-coil regions span residues 221-260 (NSEQ…KGKI) and 353-378 (TEDS…SKLL).

Binds to centriolar microtubules.

Its subcellular location is the cytoplasm. It is found in the cytoskeleton. It localises to the microtubule organizing center. The protein localises to the centrosome. The protein resides in the centriole. Its subcellular location is the spindle pole. It is found in the midbody. Functionally, centriole-enriched microtubule-binding protein involved in centriole biogenesis. In collaboration with CEP295 and POC1B, is required for the centriole-to-centrosome conversion by ensuring the formation of bona fide centriole wall. Functions as a linker component that maintains centrosome cohesion. Associates with CROCC and regulates its stability and localization to the centrosome. This Xenopus laevis (African clawed frog) protein is Centrosomal protein of 44 kDa (cep44).